The chain runs to 709 residues: Acyl-coenzyme A oxidase 4 (709 aa).

The segment covering 1–12 has biased composition (polar residues); sequence MTFTKKNVSVSQ. The tract at residues 1–29 is disordered; sequence MTFTKKNVSVSQGPDPRSSIQKERDSSKW.

It belongs to the acyl-CoA oxidase family. As to quaternary structure, homooctamer. FAD is required as a cofactor.

Its subcellular location is the peroxisome. The enzyme catalyses a 2,3-saturated acyl-CoA + O2 = a (2E)-enoyl-CoA + H2O2. It participates in lipid metabolism; peroxisomal fatty acid beta-oxidation. The polypeptide is Acyl-coenzyme A oxidase 4 (POX4) (Candida tropicalis (Yeast)).